The following is a 256-amino-acid chain: DNA repair protein RecO (256 aa).

This sequence belongs to the RecO family.

Its function is as follows. Involved in DNA repair and RecF pathway recombination. This chain is DNA repair protein RecO, found in Rhizobium leguminosarum bv. trifolii (strain WSM2304).